A 446-amino-acid chain; its full sequence is NADH-quinone oxidoreductase subunit D (446 aa).

It belongs to the complex I 49 kDa subunit family. As to quaternary structure, NDH-1 is composed of 14 different subunits. Subunits NuoB, C, D, E, F, and G constitute the peripheral sector of the complex.

It is found in the cell membrane. It carries out the reaction a quinone + NADH + 5 H(+)(in) = a quinol + NAD(+) + 4 H(+)(out). In terms of biological role, NDH-1 shuttles electrons from NADH, via FMN and iron-sulfur (Fe-S) centers, to quinones in the respiratory chain. The immediate electron acceptor for the enzyme in this species is believed to be a menaquinone. Couples the redox reaction to proton translocation (for every two electrons transferred, four hydrogen ions are translocated across the cytoplasmic membrane), and thus conserves the redox energy in a proton gradient. The polypeptide is NADH-quinone oxidoreductase subunit D (Mycobacterium sp. (strain JLS)).